A 281-amino-acid chain; its full sequence is Non-selective voltage-gated ion channel 2 (281 aa).

Arg11 and Arg19 together coordinate ATP.

It belongs to the eukaryotic mitochondrial porin family.

It localises to the mitochondrion outer membrane. Non-selective voltage-gated ion channel that mediates the transport of anions and cations through the mitochondrion outer membrane. The channel adopts an open conformation at low or zero membrane potential and a closed conformation at potentials above 30-40 mV. The open state has a weak anion selectivity whereas the closed state is cation-selective. Does not confer permeability to NADH. Functionally, catalyzes the scrambling of phospholipids across the outer mitochondrial membrane; the mechanism is unrelated to channel activity and is capable of translocating both anionic and zwitterionic phospholipids. This chain is Non-selective voltage-gated ion channel 2 (POR2), found in Saccharomyces cerevisiae (strain ATCC 204508 / S288c) (Baker's yeast).